The primary structure comprises 314 residues: L-lactate dehydrogenase 2 (314 aa).

NAD(+)-binding positions include Val16, Asp37, Lys42, Tyr68, and 82–83 (GL). Residues Gln85, Arg91, and 123 to 126 (NPVD) each bind substrate. Residues 121 to 123 (ATN) and Ser146 contribute to the NAD(+) site. A substrate-binding site is contributed by 151 to 154 (DSAR). Positions 156 and 171 each coordinate beta-D-fructose 1,6-bisphosphate. His178 functions as the Proton acceptor in the catalytic mechanism. Position 223 is a phosphotyrosine (Tyr223). Thr232 is a binding site for substrate.

This sequence belongs to the LDH/MDH superfamily. LDH family. Homotetramer.

It is found in the cytoplasm. The catalysed reaction is (S)-lactate + NAD(+) = pyruvate + NADH + H(+). It participates in fermentation; pyruvate fermentation to lactate; (S)-lactate from pyruvate: step 1/1. Its activity is regulated as follows. Allosterically activated by fructose 1,6-bisphosphate (FBP). Catalyzes the conversion of lactate to pyruvate. The chain is L-lactate dehydrogenase 2 from Bacillus cereus (strain ATCC 14579 / DSM 31 / CCUG 7414 / JCM 2152 / NBRC 15305 / NCIMB 9373 / NCTC 2599 / NRRL B-3711).